The chain runs to 178 residues: MYHRLILLALVGTTMANVIPFSMNNIPEEYKEFIPEEVRNFYKDLTVEDKEILRELASKHATFANEDAALEALKDKSDKLYKNAVELRNFVKAKIDSLKPDAKIFVDEIIAKARSLRSDDGHKLDTEKIKQAARDIIAKYQALSEETKEELKVTFPAIAKIIGNEKLKRNASTFLQKN.

Residues 1 to 16 (MYHRLILLALVGTTMA) form the signal peptide. Coiled coils occupy residues 67–89 (DAAL…ELRN) and 130–153 (KQAA…ELKV).

It belongs to the fatty-acid and retinol-binding protein (FARBP) family. Not glycosylated.

The protein localises to the secreted. Binds retinol and different fatty acids. This is Fatty-acid and retinol-binding protein 1 from Brugia pahangi (Filarial nematode worm).